We begin with the raw amino-acid sequence, 272 residues long: 2-amino-3,7-dideoxy-D-threo-hept-6-ulosonate synthase (272 aa).

The Proton acceptor role is filled by Asp-33. Residues 33–37 and 153–155 each bind 1-deoxy-D-threo-hexo-2,5-diulose 6-phosphate; these read DHGVS and YPR. The Proton donor role is filled by Tyr-153. The Schiff-base intermediate with substrate role is filled by Lys-184. Residues 209–210 and 237–238 each bind 1-deoxy-D-threo-hexo-2,5-diulose 6-phosphate; these read GG and GR.

It belongs to the DeoC/FbaB aldolase family. ADHS subfamily. Homodecamer.

It carries out the reaction 1-deoxy-D-threo-hexo-2,5-diulose 6-phosphate + L-aspartate 4-semialdehyde = 2,3-dioxopropyl phosphate + 2-amino-2,3,7-trideoxy-D-lyxo-hept-6-ulosonate. In terms of biological role, catalyzes a transaldol reaction between 6-deoxy-5-ketofructose 1-phosphate (DKFP) and L-aspartate semialdehyde (ASA) with an elimination of hydroxypyruvaldehyde phosphate to yield 2-amino-3,7-dideoxy-D-threo-hept-6-ulosonate (ADH). Plays a key role in an alternative pathway of the biosynthesis of 3-dehydroquinate (DHQ), which is involved in the canonical pathway for the biosynthesis of aromatic amino acids. The sequence is that of 2-amino-3,7-dideoxy-D-threo-hept-6-ulosonate synthase from Methanococcus maripaludis (strain C5 / ATCC BAA-1333).